Reading from the N-terminus, the 193-residue chain is Large ribosomal subunit protein uL5 (193 aa).

Belongs to the universal ribosomal protein uL5 family. Part of the 50S ribosomal subunit; part of the 5S rRNA/L5/L18/L25 subcomplex. Contacts the 5S rRNA and the P site tRNA. Forms a bridge to the 30S subunit in the 70S ribosome.

Functionally, this is one of the proteins that bind and probably mediate the attachment of the 5S RNA into the large ribosomal subunit, where it forms part of the central protuberance. In the 70S ribosome it contacts protein S13 of the 30S subunit (bridge B1b), connecting the 2 subunits; this bridge is implicated in subunit movement. Contacts the P site tRNA; the 5S rRNA and some of its associated proteins might help stabilize positioning of ribosome-bound tRNAs. The sequence is that of Large ribosomal subunit protein uL5 from Corynebacterium urealyticum (strain ATCC 43042 / DSM 7109).